Reading from the N-terminus, the 4563-residue chain is Apolipoprotein B-100 (4563 aa).

A signal peptide spans 1-27 (MDPPRPALLALLALPALLLLLLAGARA). The tract at residues 32–126 (LENVSLVCPK…KNSEEFAAAM (95 aa)) is heparin-binding. Asparagine 34 carries N-linked (GlcNAc...) asparagine glycosylation. 2 disulfides stabilise this stretch: cysteine 39-cysteine 88 and cysteine 78-cysteine 97. Residues 46–672 (FKHLRKYTYN…PNNYLPKESM (627 aa)) enclose the Vitellogenin domain. Residue asparagine 185 is glycosylated (N-linked (GlcNAc...) asparagine). Intrachain disulfides connect cysteine 186–cysteine 212, cysteine 245–cysteine 261, cysteine 385–cysteine 390, and cysteine 478–cysteine 513. The heparin-binding stretch occupies residues 232–306 (TRPLSTLISS…RFFGEGTKKM (75 aa)). The segment at 902-959 (NTNFFHESGLEAHVALKAGKLKFIIPSPKRPVKLLSGGNTLHLVSTTKTEVIPPLIEN) is heparin-binding. A disulfide bridge links cysteine 966 with cysteine 976. An N-linked (GlcNAc...) asparagine glycan is attached at asparagine 983. The S-palmitoyl cysteine moiety is linked to residue cysteine 1112. Asparagine 1368, asparagine 1377, and asparagine 1523 each carry an N-linked (GlcNAc...) asparagine glycan. Position 2004 is an N6-acetyllysine (lysine 2004). Residues 2043–2178 (RDAVEKPQEF…EKLSQLQTYM (136 aa)) are heparin-binding. Asparagine 2239, asparagine 2560, asparagine 2779, asparagine 2982, and asparagine 3101 each carry an N-linked (GlcNAc...) asparagine glycan. Residues 3161–3236 (FLKTTKQSFD…KIKFDKYKAE (76 aa)) are heparin-binding. The interval 3174 to 3184 (KAQYKKNKHRH) is basic (possible receptor binding region). A disulfide bond links cysteine 3194 and cysteine 3324. Asparagine 3224 is a glycosylation site (N-linked (GlcNAc...) asparagine). Serine 3279 carries the phosphoserine modification. N-linked (GlcNAc...) asparagine glycosylation is found at asparagine 3336 and asparagine 3358. Positions 3373–3393 (VIDALQYKLEGTTRLTRKRGL) are LDL receptor binding. The heparin-binding stretch occupies residues 3383-3516 (GTTRLTRKRG…REYSGTIASE (134 aa)). The basic (possible receptor binding region) stretch occupies residues 3386-3394 (RLTRKRGLK). N-linked (GlcNAc...) asparagine glycans are attached at residues asparagine 3411, asparagine 3465, and asparagine 3895. At serine 4048 the chain carries Phosphoserine; by FAM20C. At threonine 4052 the chain carries Phosphothreonine. N-linked (GlcNAc...) asparagine glycosylation is found at asparagine 4237 and asparagine 4431.

As to quaternary structure, interacts with PCSK9. Interacts with MTTP. Interacts with AUP1. Interacts with CIDEB. In terms of processing, palmitoylated; structural requirement for proper assembly of the hydrophobic core of the lipoprotein particle.

The protein localises to the cytoplasm. The protein resides in the secreted. It is found in the lipid droplet. In terms of biological role, apolipoprotein B is a major protein constituent of chylomicrons (apo B-48), LDL (apo B-100) and VLDL (apo B-100). Apo B-100 functions as a recognition signal for the cellular binding and internalization of LDL particles by the apoB/E receptor. This Homo sapiens (Human) protein is Apolipoprotein B-100 (APOB).